Here is a 90-residue protein sequence, read N- to C-terminus: Guanine nucleotide-binding protein subunit gamma (90 aa).

Residue Cys-86 is the site of S-palmitoyl cysteine attachment. Cysteine methyl ester is present on Cys-87. Residue Cys-87 is the site of S-farnesyl cysteine attachment. Positions 88–90 (TIM) are cleaved as a propeptide — removed in mature form.

Belongs to the G protein gamma family. As to quaternary structure, g proteins are composed of 3 units, alpha, beta and gamma.

The protein resides in the membrane. The polypeptide is Guanine nucleotide-binding protein subunit gamma (Kluyveromyces lactis (strain ATCC 8585 / CBS 2359 / DSM 70799 / NBRC 1267 / NRRL Y-1140 / WM37) (Yeast)).